Here is a 175-residue protein sequence, read N- to C-terminus: uncharacterized protein (175 aa).

The HTH marR-type domain maps to 10–157 (LFELYAELIH…AERLFRDLVT (148 aa)). A DNA-binding region (H-T-H motif) is located at residues 68–91 (VTSIAEKMNTTKATVSRISTKLLG).

It localises to the cytoplasm. This is an uncharacterized protein from Bacillus subtilis (strain 168).